Consider the following 602-residue polypeptide: Multiple epidermal growth factor-like domains protein 9 (602 aa).

Residues 1-30 form the signal peptide; it reads MNGGAERAMRSLPSLGGLALLCCAAAAAAA. The Extracellular segment spans residues 31–514; the sequence is AVASAASAGN…LADVSWTQFN (484 aa). The interval 38–199 is disordered; that stretch reads AGNVTGGGGA…PATEAPSSPP (162 aa). N-linked (GlcNAc...) asparagine glycosylation is present at Asn40. 2 stretches are compositionally biased toward low complexity: residues 68–85 and 139–166; these read PRAT…PPRA and APTR…TVPA. The span at 167-176 shows a compositional bias: pro residues; it reads PTTPRTPTPD. Asn182 is a glycosylation site (N-linked (GlcNAc...) asparagine). Pro residues predominate over residues 187-199; that stretch reads PTPPATEAPSSPP. 20 disulfides stabilise this stretch: Cys204–Cys217, Cys206–Cys224, Cys226–Cys235, Cys238–Cys251, Cys254–Cys266, Cys256–Cys272, Cys274–Cys283, Cys286–Cys298, Cys301–Cys310, Cys303–Cys317, Cys320–Cys329, Cys332–Cys346, Cys349–Cys360, Cys351–Cys371, Cys374–Cys383, Cys386–Cys397, Cys400–Cys415, Cys402–Cys422, Cys425–Cys434, and Cys437–Cys449. Laminin EGF-like domains follow at residues 204–253, 254–300, 301–348, 349–399, and 400–451; these read CNCS…LCQP, CDCS…GCLP, CQCN…ECLR, CPCS…ICRK, and CQCH…NCIK. Asn205 and Asn218 each carry an N-linked (GlcNAc...) asparagine glycan. An N-linked (GlcNAc...) asparagine glycan is attached at Asn245. Asn267 is a glycosylation site (N-linked (GlcNAc...) asparagine). Asn305 is a glycosylation site (N-linked (GlcNAc...) asparagine). Asn428 is a glycosylation site (N-linked (GlcNAc...) asparagine). 3 N-linked (GlcNAc...) asparagine glycosylation sites follow: Asn468, Asn481, and Asn500. A helical transmembrane segment spans residues 515–535; that stretch reads IIILTVIIIVVVLLMGFVGAV. Over 536–602 the chain is Cytoplasmic; that stretch reads YMYREYQNRK…LTTPIHNYKA (67 aa).

Its subcellular location is the membrane. This Homo sapiens (Human) protein is Multiple epidermal growth factor-like domains protein 9 (MEGF9).